The sequence spans 316 residues: MADSKHQVIFCNDSPKRVLVSVIKTTPIKPRTTADSLMPTSPGFSDFMVYPWRWGENAHNVTLGPGSGSGAASPTRTSSSPAEADPLSCPEHLKDGIRRGRPRADTVRELINEGENSTSRIRCNICNRVFPREKSLQAHKRTHTGERPYLCDYPDCGKAFVQSGQLKTHQRLHTGEKPFVCSEKACGSRFTHANRHCAKHPYARLKREEPTGGPGKSQGADNKAVAEWLTKYWQTREQRSPVPGKAKPQNKSPLEDQEQQDPLDFLPSDEGEEEEQEEEKNAPSGGVVTARRRLQEQRERLHGALALIELANNLSA.

Positions 61-97 (VTLGPGSGSGAASPTRTSSSPAEADPLSCPEHLKDGI) are disordered. The span at 70 to 82 (GAASPTRTSSSPA) shows a compositional bias: low complexity. C2H2-type zinc fingers lie at residues 121-143 (IRCN…KRTH) and 149-173 (YLCD…QRLH). The disordered stretch occupies residues 234-294 (QTREQRSPVP…GGVVTARRRL (61 aa)). Residues 255–278 (EDQEQQDPLDFLPSDEGEEEEQEE) show a composition bias toward acidic residues. A coiled-coil region spans residues 289–313 (TARRRLQEQRERLHGALALIELANN).

This sequence belongs to the krueppel C2H2-type zinc-finger protein family.

The protein resides in the nucleus. Functionally, transcriptional activator. The protein is Zinc finger protein 367 (znf367) of Danio rerio (Zebrafish).